Consider the following 119-residue polypeptide: Large ribosomal subunit protein bL20 (119 aa).

This sequence belongs to the bacterial ribosomal protein bL20 family.

Functionally, binds directly to 23S ribosomal RNA and is necessary for the in vitro assembly process of the 50S ribosomal subunit. It is not involved in the protein synthesizing functions of that subunit. The sequence is that of Large ribosomal subunit protein bL20 from Streptococcus mutans serotype c (strain ATCC 700610 / UA159).